The following is a 355-amino-acid chain: UDP-glucose 4-epimerase uge1 (355 aa).

An NAD(+)-binding site is contributed by 8-39; the sequence is TVLVTGGAGYIGSHTCVVLLEKGYDVVIVDNL.

The protein belongs to the NAD(P)-dependent epimerase/dehydratase family. Requires NAD(+) as cofactor.

It carries out the reaction UDP-alpha-D-glucose = UDP-alpha-D-galactose. Its pathway is carbohydrate metabolism; galactose metabolism. In terms of biological role, major UDP-glucose/-galactose 4-epimerase under glucose-rich conditions involved in protein galactosylation. The chain is UDP-glucose 4-epimerase uge1 (uge1) from Schizosaccharomyces pombe (strain 972 / ATCC 24843) (Fission yeast).